A 631-amino-acid polypeptide reads, in one-letter code: Probable potassium transport system protein Kup (631 aa).

The next 12 membrane-spanning stretches (helical) occupy residues 17 to 37 (IGLL…SPLY), 56 to 76 (ILGV…FKYM), 109 to 129 (MMMV…SMIT), 147 to 167 (GLDH…FLIQ), 174 to 194 (IGVL…ALGV), 215 to 235 (FFII…LALT), 256 to 276 (WFIL…ALVL), 288 to 308 (LLAP…ATII), 346 to 366 (IYIG…VIGF), 378 to 398 (VAVT…MLML), 403 to 423 (PLLA…FFAA), and 428 to 448 (IFQG…LMTT).

The protein belongs to the HAK/KUP transporter (TC 2.A.72) family.

The protein localises to the cell inner membrane. The catalysed reaction is K(+)(in) + H(+)(in) = K(+)(out) + H(+)(out). Transport of potassium into the cell. Likely operates as a K(+):H(+) symporter. The protein is Probable potassium transport system protein Kup of Pseudomonas syringae pv. tomato (strain ATCC BAA-871 / DC3000).